We begin with the raw amino-acid sequence, 663 residues long: Transcriptional repressor CTCFL (663 aa).

A compositionally biased stretch (basic and acidic residues) spans 24 to 51; it reads EKGLKEEEKDGVCREKDHRSPSELEAER. 2 disordered regions span residues 24-55 and 221-250; these read EKGLKEEEKDGVCREKDHRSPSELEAERTSGA and NSNVEEQEDQPTAGQADAEKAKSTKNQRKT. C2H2-type zinc fingers lie at residues 257-279, 285-307, 313-336, 342-364, 370-392, 398-421, 428-451, 458-480, 486-508, and 514-537; these read FHCDVCMFTSSRMSSFNRHMKTH, HLCHLCLKTFRTVTLLRNHVNTH, YKCNDCNMAFVTSGELVRHRRYKH, FKCSMCKYASVEASKLKRHVRSH, FQCCQCSYASRDTYKLKRHMRTH, YECHICHTRFTQSGTMKIHILQKH, YQCPHCATIIARKSDLRVHMRNLH, LKCRYCSAVFHERYALIQHQKTH, FKCKHCSYACKQERHMTAHIRTH, and FTCLSCNKCFRQKQLLNAHFRKYH. The C2H2-type 11; atypical zinc finger occupies 546 to 568; that stretch reads YKCSKCGKGFSRWINLHRHSEKC. Residues 569-630 are disordered; the sequence is GSGEAKSAAS…STTKGEQFPG (62 aa). A compositionally biased stretch (basic residues) spans 580–590; it reads KGRRTRKRKQT. Residues 594-607 show a composition bias toward basic and acidic residues; that stretch reads EATKGQKEAAKGWK. A compositionally biased stretch (low complexity) spans 608–620; sequence EAANGDEAAAEEA.

The protein belongs to the CTCF zinc-finger protein family. Interacts with histones, PRMT7 and SETD1A. Interacts (via N-terminus) with BAG6/BAT3. As to expression, testis specific. Specifically expressed in primary spermatocytes.

It is found in the cytoplasm. Its subcellular location is the nucleus. Its function is as follows. Testis-specific DNA binding protein responsible for insulator function, nuclear architecture and transcriptional control, which probably acts by recruiting epigenetic chromatin modifiers. Plays a key role in gene imprinting in male germline, by participating in the establishment of differential methylation at the IGF2/H19 imprinted control region (ICR). Directly binds the unmethylated H19 ICR and recruits the PRMT7 methyltransferase, leading to methylate histone H4 'Arg-3' to form H4R3sme2. This probably leads to recruit de novo DNA methyltransferases at these sites. Seems to act as tumor suppressor. In association with DNMT1 and DNMT3B, involved in activation of BAG1 gene expression by binding to its promoter. Required for dimethylation of H3 lysine 4 (H3K4me2) of MYC and BRCA1 promoters. The protein is Transcriptional repressor CTCFL (CTCFL) of Homo sapiens (Human).